The following is a 743-amino-acid chain: Peptide transporter family 1 (743 aa).

The disordered stretch occupies residues 1–28; it reads MASEITNGKNGQNGKNGQKEESDSQIAP. A compositionally biased stretch (low complexity) spans 7 to 16; the sequence is NGKNGQNGKN. A run of 10 helical transmembrane segments spans residues 74–94, 104–124, 132–152, 173–193, 207–227, 334–354, 364–384, 597–619, 629–649, and 659–679; these read VLFH…ALIA, ILYL…GAVP, AVTV…KPCV, FSLF…FTPI, FSLA…IFMA, VVNP…IYPA, LQKL…SAGL, LPQI…EFSY, VLQA…VVIA, and GEFT…LWLA.

It belongs to the major facilitator superfamily. Proton-dependent oligopeptide transporter (POT/PTR) (TC 2.A.17) family. In terms of tissue distribution, expressed in thorax and abdomen of females: apical epithelial membranes of midgut, rectum, and reproductive tract. Also expressed in neuropil of the central nervous system, with elevated expression within the alpha- and beta-lobes of the mushroom bodies.

Its subcellular location is the membrane. In terms of biological role, important role in absorption of dietary peptides. High-affinity transporter of alanylalanine. Dipeptide transport activity is proton dependent. In Drosophila melanogaster (Fruit fly), this protein is Peptide transporter family 1 (yin).